The primary structure comprises 412 residues: DnaJ homolog subfamily A member 2 (412 aa).

Positions 8–70 (KLYDILGVPP…EKRELYDRYG (63 aa)) constitute a J domain. An N6-acetyllysine modification is found at Lys39. Residues Ser78 and Ser123 each carry the phosphoserine modification. The CR-type zinc-finger motif lies at 130–214 (GKTTKLQLSK…CEGKKVIKEV (85 aa)). Residue Lys134 forms a Glycyl lysine isopeptide (Lys-Gly) (interchain with G-Cter in SUMO2) linkage. Zn(2+) is bound by residues Cys143 and Cys146. The stretch at 143–150 (CSACSGQG) is one CXXCXGXG motif repeat. Lys152 is subject to N6-acetyllysine. Positions 159, 162, 186, 189, 202, and 205 each coordinate Zn(2+). 3 CXXCXGXG motif repeats span residues 159 to 166 (CSACRGRG), 186 to 193 (CSDCNGEG), and 202 to 209 (CKKCEGKK). The interval 365-412 (IGETEEVELQEFDSTRGSGGGQRREAYNDSSDEESSSHHGPGVQCAHQ) is disordered. Tyr391 carries the phosphotyrosine modification. Phosphoserine occurs at positions 394 and 395. Residue Cys409 is modified to Cysteine methyl ester. Residue Cys409 is the site of S-farnesyl cysteine attachment. Residues 410–412 (AHQ) constitute a propeptide, removed in mature form.

It localises to the membrane. In terms of biological role, co-chaperone of Hsc70. Stimulates ATP hydrolysis and the folding of unfolded proteins mediated by HSPA1A/B (in vitro). The chain is DnaJ homolog subfamily A member 2 (Dnaja2) from Mus musculus (Mouse).